A 126-amino-acid chain; its full sequence is Fatty acid-binding protein, liver (126 aa).

Cholate is bound by residues 54-56, 99-101, and Arg121; these read TPN and HEQ.

The protein belongs to the calycin superfamily. Fatty-acid binding protein (FABP) family.

It is found in the cytoplasm. Its function is as follows. FABPs are thought to play a role in the intracellular transport of long-chain fatty acids and their acyl-CoA esters. The polypeptide is Fatty acid-binding protein, liver (Anolis pulchellus (Common grass anole)).